A 289-amino-acid polypeptide reads, in one-letter code: ATP synthase gamma chain (289 aa).

Belongs to the ATPase gamma chain family. As to quaternary structure, F-type ATPases have 2 components, CF(1) - the catalytic core - and CF(0) - the membrane proton channel. CF(1) has five subunits: alpha(3), beta(3), gamma(1), delta(1), epsilon(1). CF(0) has three main subunits: a, b and c.

The protein resides in the cell inner membrane. In terms of biological role, produces ATP from ADP in the presence of a proton gradient across the membrane. The gamma chain is believed to be important in regulating ATPase activity and the flow of protons through the CF(0) complex. The polypeptide is ATP synthase gamma chain (Herminiimonas arsenicoxydans).